Here is a 329-residue protein sequence, read N- to C-terminus: 4-hydroxythreonine-4-phosphate dehydrogenase (329 aa).

2 residues coordinate substrate: His136 and Thr137. Residues His166, His211, and His266 each contribute to the a divalent metal cation site. Residues Lys274, Asn283, and Arg292 each coordinate substrate.

This sequence belongs to the PdxA family. In terms of assembly, homodimer. The cofactor is Zn(2+). Requires Mg(2+) as cofactor. Co(2+) serves as cofactor.

It is found in the cytoplasm. The enzyme catalyses 4-(phosphooxy)-L-threonine + NAD(+) = 3-amino-2-oxopropyl phosphate + CO2 + NADH. It functions in the pathway cofactor biosynthesis; pyridoxine 5'-phosphate biosynthesis; pyridoxine 5'-phosphate from D-erythrose 4-phosphate: step 4/5. Its function is as follows. Catalyzes the NAD(P)-dependent oxidation of 4-(phosphooxy)-L-threonine (HTP) into 2-amino-3-oxo-4-(phosphooxy)butyric acid which spontaneously decarboxylates to form 3-amino-2-oxopropyl phosphate (AHAP). This Escherichia coli (strain SE11) protein is 4-hydroxythreonine-4-phosphate dehydrogenase.